Here is a 107-residue protein sequence, read N- to C-terminus: U1-lycotoxin-Ls1o (107 aa).

The N-terminal stretch at 1–20 is a signal peptide; it reads MMKVLVVVALLVTLISYSSS. The propeptide occupies 21–41; that stretch reads EGIDDLEADELLSLMANEQTR. 4 disulfides stabilise this stretch: Cys-44/Cys-59, Cys-51/Cys-68, Cys-58/Cys-86, and Cys-70/Cys-84.

The protein belongs to the neurotoxin 19 (CSTX) family. 04 (U1-Lctx) subfamily. As to expression, expressed by the venom gland.

It is found in the secreted. This Lycosa singoriensis (Wolf spider) protein is U1-lycotoxin-Ls1o.